The sequence spans 260 residues: Putative protein phosphatase 2C-like protein 44 (260 aa).

One can recognise a PPM-type phosphatase domain in the interval 41–259 (YYTVDRLSYA…SSISCVVIRF (219 aa)).

It belongs to the PP2C family.

This is Putative protein phosphatase 2C-like protein 44 from Arabidopsis thaliana (Mouse-ear cress).